The sequence spans 123 residues: DPEP2 neighbor protein (123 aa).

The disordered stretch occupies residues 67–123 (APLATPTKAEAEKPAPRRAPKRRQATIESDKDLGCSSPKIRRLEHRGRRLTPQKLAG). The span at 105–117 (KIRRLEHRGRRLT) shows a compositional bias: basic residues.

This is DPEP2 neighbor protein from Homo sapiens (Human).